The following is a 188-amino-acid chain: Phosphatidylinositol N-acetylglucosaminyltransferase subunit H (188 aa).

Belongs to the PIGH family. As to quaternary structure, component of the glycosylphosphatidylinositol-N-acetylglucosaminyltransferase (GPI-GnT) complex composed at least by PIGA, PIGC, PIGH, PIGP, PIGQ, PIGY and DPM2. Interacts with PIGQ.

The protein localises to the cytoplasm. The protein operates within glycolipid biosynthesis; glycosylphosphatidylinositol-anchor biosynthesis. Its function is as follows. Part of the glycosylphosphatidylinositol-N-acetylglucosaminyltransferase (GPI-GnT) complex that catalyzes the transfer of N-acetylglucosamine from UDP-N-acetylglucosamine to phosphatidylinositol and participates in the first step of GPI biosynthesis. This chain is Phosphatidylinositol N-acetylglucosaminyltransferase subunit H, found in Bos taurus (Bovine).